The sequence spans 422 residues: Histidine--tRNA ligase (422 aa).

The protein belongs to the class-II aminoacyl-tRNA synthetase family. Homodimer.

It is found in the cytoplasm. The enzyme catalyses tRNA(His) + L-histidine + ATP = L-histidyl-tRNA(His) + AMP + diphosphate + H(+). The chain is Histidine--tRNA ligase from Prosthecochloris aestuarii (strain DSM 271 / SK 413).